A 997-amino-acid polypeptide reads, in one-letter code: Kinesin-like protein KIF19 (997 aa).

In terms of domain architecture, Kinesin motor spans 11 to 346 (QLMVALRVRP…LTYAGRAKNI (336 aa)). 104 to 111 (GPTGCGKT) serves as a coordination point for ATP. A coiled-coil region spans residues 361-388 (IAQYTSIIADLRGEIQRLKCKIDQQAGR). A compositionally biased stretch (basic and acidic residues) spans 477–494 (EERRKESYTKEDSEKDSD). Disordered stretches follow at residues 477-509 (EERR…EVAS), 665-704 (KITP…GTDS), 718-759 (QVKS…SSEN), and 784-997 (AAQR…LQHN). The stretch at 506–551 (EVASARENIAALVGEQKKLRKEKLALEQRCRELRARGRRLEETLPR) forms a coiled coil. Over residues 683-697 (KTLSSEAQRPQNNTL) the composition is skewed to polar residues. Residues 750-759 (INSSPESSEN) are compositionally biased toward low complexity. 2 stretches are compositionally biased toward polar residues: residues 835 to 851 (TLQH…STGE) and 950 to 959 (PNQNTGSGNP).

The protein belongs to the TRAFAC class myosin-kinesin ATPase superfamily. Kinesin family. In terms of tissue distribution, strongly expressed in the oviduct and trachea. Expressed in testis, lung, ovary and brain.

It localises to the cytoplasm. The protein resides in the cytoskeleton. It is found in the cell projection. The protein localises to the cilium. In terms of biological role, plus end-directed microtubule-dependent motor protein that regulates the length of motile cilia by mediating depolymerization of microtubules at ciliary tips. The protein is Kinesin-like protein KIF19 (Kif19) of Mus musculus (Mouse).